Consider the following 638-residue polypeptide: Adhesion G-protein coupled receptor F2 (638 aa).

The signal sequence occupies residues 1 to 25 (MISARWLYCLVLLLATESCRLFCQA). Topologically, residues 26–386 (ASKSKENVMP…ESPVLTYITY (361 aa)) are extracellular. Residues Asn155, Asn219, Asn248, Asn293, and Asn311 are each glycosylated (N-linked (GlcNAc...) asparagine). The region spanning 233 to 377 (PRNSLGKNFT…SILMSPNTVE (145 aa)) is the GAIN-B domain. 2 disulfides stabilise this stretch: Cys329-Cys356 and Cys344-Cys358. The segment at 329-377 (CVGWHSLESRWDRRACKMIQENSRQAICRCQPNKFFTSFSILMSPNTVE) is GPS. Residues 387–407 (IGLGISICSLIICLAIEALVW) form a helical membrane-spanning segment. Over 408 to 422 (SQVTKTEISYLRHLC) the chain is Cytoplasmic. A helical membrane pass occupies residues 423 to 443 (IANIAVTLLMADVWFIVASFL). At 444-465 (SGPIVHHNGCVTATFFVHFFYL) the chain is on the extracellular side. A helical transmembrane segment spans residues 466-486 (SVFFWMLAKALLILYGILIVF). The Cytoplasmic portion of the chain corresponds to 487–493 (HTLPKSC). Residues 494–514 (LVASLFTVGYGCPLVIAVITL) traverse the membrane as a helical segment. The Extracellular portion of the chain corresponds to 515–541 (AVTEPGKGYLRPEACWLNWDMTKALLA). The helical transmembrane segment at 542-562 (FVVPALAIVVVNLITVTLVII) threads the bilayer. Residues 563–586 (KTQRAAVGSSMFQEVRAIVRICKN) are Cytoplasmic-facing. Residues 587–607 (IAILTPLLGLTWGFGIATVVA) form a helical membrane-spanning segment. The Extracellular segment spans residues 608–610 (GHS). Residues 611–631 (LAFHIIFSLLNALQVSPDAMI) traverse the membrane as a helical segment. The Cytoplasmic portion of the chain corresponds to 632-638 (ESEWRGC).

The protein belongs to the G-protein coupled receptor 2 family. Adhesion G-protein coupled receptor (ADGR) subfamily.

The protein resides in the membrane. Orphan receptor. This is Adhesion G-protein coupled receptor F2 (Adgrf2) from Rattus norvegicus (Rat).